The sequence spans 206 residues: Thiamine-phosphate synthase (206 aa).

4-amino-2-methyl-5-(diphosphooxymethyl)pyrimidine contacts are provided by residues 33 to 37 (QMRFK) and Asn-65. Mg(2+)-binding residues include Asp-66 and Asp-85. Thr-104 is a binding site for 4-amino-2-methyl-5-(diphosphooxymethyl)pyrimidine. A 2-[(2R,5Z)-2-carboxy-4-methylthiazol-5(2H)-ylidene]ethyl phosphate-binding site is contributed by 130 to 132 (TAT). Lys-133 serves as a coordination point for 4-amino-2-methyl-5-(diphosphooxymethyl)pyrimidine. Gly-166 lines the 2-[(2R,5Z)-2-carboxy-4-methylthiazol-5(2H)-ylidene]ethyl phosphate pocket.

Belongs to the thiamine-phosphate synthase family. It depends on Mg(2+) as a cofactor.

It catalyses the reaction 2-[(2R,5Z)-2-carboxy-4-methylthiazol-5(2H)-ylidene]ethyl phosphate + 4-amino-2-methyl-5-(diphosphooxymethyl)pyrimidine + 2 H(+) = thiamine phosphate + CO2 + diphosphate. It carries out the reaction 2-(2-carboxy-4-methylthiazol-5-yl)ethyl phosphate + 4-amino-2-methyl-5-(diphosphooxymethyl)pyrimidine + 2 H(+) = thiamine phosphate + CO2 + diphosphate. The enzyme catalyses 4-methyl-5-(2-phosphooxyethyl)-thiazole + 4-amino-2-methyl-5-(diphosphooxymethyl)pyrimidine + H(+) = thiamine phosphate + diphosphate. It participates in cofactor biosynthesis; thiamine diphosphate biosynthesis; thiamine phosphate from 4-amino-2-methyl-5-diphosphomethylpyrimidine and 4-methyl-5-(2-phosphoethyl)-thiazole: step 1/1. Its function is as follows. Condenses 4-methyl-5-(beta-hydroxyethyl)thiazole monophosphate (THZ-P) and 2-methyl-4-amino-5-hydroxymethyl pyrimidine pyrophosphate (HMP-PP) to form thiamine monophosphate (TMP). This Flavobacterium psychrophilum (strain ATCC 49511 / DSM 21280 / CIP 103535 / JIP02/86) protein is Thiamine-phosphate synthase.